Reading from the N-terminus, the 122-residue chain is Flagellar protein FliT (122 aa).

The tract at residues 1–50 is required for homodimerization; the sequence is MERQQQLLAAYQQIHSLSSQMIALAQTERWEDLVELELAYVTAVESTAAF. Residues 60-98 are fliD binding; the sequence is LQELLRNKLQQILDNETELKRLLQQRMDQLKELIGQSTR.

It belongs to the FliT family. As to quaternary structure, homodimer. Interacts with FliD and FlhC.

It localises to the cytoplasm. It is found in the cytosol. Its function is as follows. Dual-function protein that regulates the transcription of class 2 flagellar operons and that also acts as an export chaperone for the filament-capping protein FliD. As a transcriptional regulator, acts as an anti-FlhDC factor; it directly binds FlhC, thus inhibiting the binding of the FlhC/FlhD complex to class 2 promoters, resulting in decreased expression of class 2 flagellar operons. As a chaperone, effects FliD transition to the membrane by preventing its premature polymerization, and by directing it to the export apparatus. The chain is Flagellar protein FliT from Serratia proteamaculans (strain 568).